A 214-amino-acid polypeptide reads, in one-letter code: Methylthioribulose-1-phosphate dehydratase (214 aa).

H103 and H105 together coordinate Zn(2+).

It belongs to the aldolase class II family. MtnB subfamily. It depends on Zn(2+) as a cofactor.

The enzyme catalyses 5-(methylsulfanyl)-D-ribulose 1-phosphate = 5-methylsulfanyl-2,3-dioxopentyl phosphate + H2O. Its pathway is amino-acid biosynthesis; L-methionine biosynthesis via salvage pathway; L-methionine from S-methyl-5-thio-alpha-D-ribose 1-phosphate: step 2/6. Its function is as follows. Catalyzes the dehydration of methylthioribulose-1-phosphate (MTRu-1-P) into 2,3-diketo-5-methylthiopentyl-1-phosphate (DK-MTP-1-P). The chain is Methylthioribulose-1-phosphate dehydratase from Granulibacter bethesdensis (strain ATCC BAA-1260 / CGDNIH1).